Here is a 386-residue protein sequence, read N- to C-terminus: Probable zinc transporter zrg17 (386 aa).

6 consecutive transmembrane segments (helical) span residues isoleucine 102–threonine 122, isoleucine 128–valine 148, methionine 163–leucine 183, valine 208–leucine 228, phenylalanine 243–tyrosine 263, and phenylalanine 268–isoleucine 288.

The protein belongs to the cation diffusion facilitator (CDF) transporter (TC 2.A.4) family. SLC30A subfamily. In terms of assembly, interacts with cis4.

The protein resides in the cytoplasm. It localises to the nucleus membrane. Functionally, probable transporter involved in the regulation of zinc homeostasis. This Schizosaccharomyces pombe (strain 972 / ATCC 24843) (Fission yeast) protein is Probable zinc transporter zrg17 (zrg17).